The chain runs to 76 residues: Putative membrane protein insertion efficiency factor (76 aa).

The protein belongs to the UPF0161 family.

The protein localises to the cell inner membrane. Functionally, could be involved in insertion of integral membrane proteins into the membrane. This Porphyromonas gingivalis (strain ATCC 33277 / DSM 20709 / CIP 103683 / JCM 12257 / NCTC 11834 / 2561) protein is Putative membrane protein insertion efficiency factor.